The sequence spans 376 residues: Putative glutamate--cysteine ligase 2-1 (376 aa).

This sequence belongs to the glutamate--cysteine ligase type 2 family. YbdK subfamily.

The catalysed reaction is L-cysteine + L-glutamate + ATP = gamma-L-glutamyl-L-cysteine + ADP + phosphate + H(+). In terms of biological role, ATP-dependent carboxylate-amine ligase which exhibits weak glutamate--cysteine ligase activity. The protein is Putative glutamate--cysteine ligase 2-1 of Mycolicibacterium smegmatis (strain ATCC 700084 / mc(2)155) (Mycobacterium smegmatis).